A 207-amino-acid chain; its full sequence is 8-oxoguanine DNA glycosylase/AP lyase (207 aa).

Active-site residues include K129 and D147.

It belongs to the type-2 OGG1 family.

The catalysed reaction is 2'-deoxyribonucleotide-(2'-deoxyribose 5'-phosphate)-2'-deoxyribonucleotide-DNA = a 3'-end 2'-deoxyribonucleotide-(2,3-dehydro-2,3-deoxyribose 5'-phosphate)-DNA + a 5'-end 5'-phospho-2'-deoxyribonucleoside-DNA + H(+). Functionally, catalyzes the excision of an oxidatively damaged form of guanine (7,8-dihydro-8-oxoguanine = 8-oxoG) from DNA. Also cleaves the DNA backbone at apurinic/apyrimidinic sites (AP sites). The sequence is that of 8-oxoguanine DNA glycosylase/AP lyase from Thermotoga sp. (strain RQ2).